The chain runs to 107 residues: Putative double-stranded DNA mimic protein Spro_2690 (107 aa).

The protein belongs to the putative dsDNA mimic protein family.

Its function is as follows. May act as a double-stranded DNA (dsDNA) mimic. Probably regulates the activity of a dsDNA-binding protein. This chain is Putative double-stranded DNA mimic protein Spro_2690, found in Serratia proteamaculans (strain 568).